The primary structure comprises 57 residues: Defensin-like protein 302 (57 aa).

3 disulfide bridges follow: C19/C39, C26/C44, and C32/C46.

Belongs to the DEFL family.

This chain is Defensin-like protein 302, found in Arabidopsis thaliana (Mouse-ear cress).